Consider the following 800-residue polypeptide: DNA topoisomerase 4 subunit A (800 aa).

The Topo IIA-type catalytic domain maps to 31-495 (LPDVRDGLKP…EIEEIKIDKE (465 aa)). Residue Tyr119 is the O-(5'-phospho-DNA)-tyrosine intermediate of the active site.

Belongs to the type II topoisomerase GyrA/ParC subunit family. ParC type 2 subfamily. In terms of assembly, heterotetramer composed of ParC and ParE.

It localises to the cell membrane. The enzyme catalyses ATP-dependent breakage, passage and rejoining of double-stranded DNA.. In terms of biological role, topoisomerase IV is essential for chromosome segregation. It relaxes supercoiled DNA. Performs the decatenation events required during the replication of a circular DNA molecule. The protein is DNA topoisomerase 4 subunit A of Staphylococcus aureus (strain MW2).